The primary structure comprises 101 residues: Urease subunit beta (101 aa).

Belongs to the urease beta subunit family. In terms of assembly, heterotrimer of UreA (gamma), UreB (beta) and UreC (alpha) subunits. Three heterotrimers associate to form the active enzyme.

It localises to the cytoplasm. The enzyme catalyses urea + 2 H2O + H(+) = hydrogencarbonate + 2 NH4(+). Its pathway is nitrogen metabolism; urea degradation; CO(2) and NH(3) from urea (urease route): step 1/1. This chain is Urease subunit beta, found in Psychromonas ingrahamii (strain DSM 17664 / CCUG 51855 / 37).